Here is a 211-residue protein sequence, read N- to C-terminus: Metalloproteinase inhibitor 3 (211 aa).

The N-terminal stretch at 1-23 is a signal peptide; it reads MTPWLGLVVLLGSWSLGDWGAEA. Cys-24 contacts Zn(2+). Involved in metalloproteinase-binding regions lie at residues 24 to 27 and 88 to 89; these read CTCS and ES. 6 disulfides stabilise this stretch: Cys-24/Cys-91, Cys-26/Cys-118, Cys-36/Cys-143, Cys-145/Cys-192, Cys-150/Cys-155, and Cys-163/Cys-184. The region spanning 24 to 143 is the NTR domain; that stretch reads CTCSPSHPQD…GLNYRYHLGC (120 aa). The mediates interaction with EFEMP1 stretch occupies residues 105 to 188; the sequence is TGRVYDGKMY…SKHYACIRQK (84 aa). Asn-207 carries an N-linked (GlcNAc...) asparagine glycan.

This sequence belongs to the protease inhibitor I35 (TIMP) family. In terms of assembly, interacts with EFEMP1. Interacts with KDR.

The protein resides in the secreted. It is found in the extracellular space. It localises to the extracellular matrix. Functionally, mediates a variety of processes including matrix regulation and turnover, inflammation, and angiogenesis, through reversible inhibition of zinc protease superfamily enzymes, primarily matrix metalloproteinases (MMPs). Regulates extracellular matrix (ECM) remodeling through inhibition of matrix metalloproteinases (MMP) including MMP-1, MMP-2, MMP-3, MMP-7, MMP-9, MMP-13, MMP-14 and MMP-15. Additionally, modulates the processing of amyloid precursor protein (APP) and apolipoprotein E receptor ApoER2 by inhibiting two alpha-secretases ADAM10 and ADAM17. Functions as a tumor suppressor and a potent inhibitor of angiogenesis. Exerts its anti-angiogenic effect by directly interacting with vascular endothelial growth factor (VEGF) receptor-2/KDR, preventing its binding to the VEGFA ligand. Selectively induces apoptosis in angiogenic endothelial cells through a caspase-independent cell death pathway. Mechanistically, inhibits matrix-induced focal adhesion kinase PTK2 tyrosine phosphorylation and association with paxillin/PXN and disrupts the incorporation of ITGB3, PTK2 and PXN into focal adhesion contacts on the matrix. This chain is Metalloproteinase inhibitor 3 (TIMP3), found in Equus caballus (Horse).